A 638-amino-acid polypeptide reads, in one-letter code: Signal recognition particle receptor subunit alpha (638 aa).

3 disordered regions span residues 129–205 (KIRA…VELS), 218–245 (IQKH…KKAP), and 262–315 (SAPT…ATKG). 2 stretches are compositionally biased toward basic and acidic residues: residues 137–146 (KKFEDSEKAK) and 153–165 (IETR…EKAK). At Ser177 the chain carries Phosphoserine. Residues 218–239 (IQKHGRGLEKSSKSTKSDAPKE) are compositionally biased toward basic and acidic residues. Thr284 is modified (phosphothreonine). Phosphoserine is present on residues Ser296, Ser297, and Ser298. Residues 304 to 314 (AQNASKPSATK) are compositionally biased toward polar residues. Positions 419-636 (YVVTFCGVNG…NAKAVVAALM (218 aa)) are NG domain. 425 to 432 (GVNGVGKS) contacts GTP. Ser473 carries the phosphoserine modification. 520–524 (DTAGR) provides a ligand contact to GTP. Thr578 carries the post-translational modification Phosphothreonine. 588–591 (TKFD) contacts GTP.

The protein belongs to the GTP-binding SRP family. In terms of assembly, heterodimer with SRPRB. Interacts with the signal recognition particle (SRP) complex subunit SRP54.

The protein localises to the endoplasmic reticulum membrane. Its function is as follows. Component of the SRP (signal recognition particle) receptor. Ensures, in conjunction with the signal recognition particle, the correct targeting of the nascent secretory proteins to the endoplasmic reticulum membrane system. Forms a guanosine 5'-triphosphate (GTP)-dependent complex with the SRP subunit SRP54. SRP receptor compaction and GTPase rearrangement drive SRP-mediated cotranslational protein translocation into the ER. This chain is Signal recognition particle receptor subunit alpha, found in Canis lupus familiaris (Dog).